A 62-amino-acid chain; its full sequence is Protein sigN176 (62 aa).

The polypeptide is Protein sigN176 (Dictyostelium discoideum (Social amoeba)).